Reading from the N-terminus, the 251-residue chain is Probable transcriptional regulatory protein TGRD_462 (251 aa).

It belongs to the TACO1 family.

The protein resides in the cytoplasm. The sequence is that of Probable transcriptional regulatory protein TGRD_462 from Endomicrobium trichonymphae.